The following is a 450-amino-acid chain: Histidinol dehydrogenase (450 aa).

Tyrosine 135, glutamine 197, and asparagine 225 together coordinate NAD(+). Residues threonine 248, glutamine 270, and histidine 273 each coordinate substrate. Residues glutamine 270 and histidine 273 each coordinate Zn(2+). Residues glutamate 339 and histidine 340 each act as proton acceptor in the active site. The substrate site is built by histidine 340, aspartate 373, glutamate 427, and histidine 432. Aspartate 373 is a Zn(2+) binding site. Histidine 432 contacts Zn(2+).

It belongs to the histidinol dehydrogenase family. Zn(2+) is required as a cofactor.

The enzyme catalyses L-histidinol + 2 NAD(+) + H2O = L-histidine + 2 NADH + 3 H(+). The protein operates within amino-acid biosynthesis; L-histidine biosynthesis; L-histidine from 5-phospho-alpha-D-ribose 1-diphosphate: step 9/9. In terms of biological role, catalyzes the sequential NAD-dependent oxidations of L-histidinol to L-histidinaldehyde and then to L-histidine. This Corynebacterium jeikeium (strain K411) protein is Histidinol dehydrogenase.